Consider the following 132-residue polypeptide: Global transcriptional regulator Spx 2 (132 aa).

Cysteines 10 and 13 form a disulfide.

Belongs to the ArsC family. Spx subfamily. As to quaternary structure, interacts with the C-terminal domain of the alpha subunit of the RNAP.

It localises to the cytoplasm. In terms of biological role, global transcriptional regulator that plays a key role in stress response and exerts either positive or negative regulation of genes. Acts by interacting with the C-terminal domain of the alpha subunit of the RNA polymerase (RNAP). This interaction can enhance binding of RNAP to the promoter region of target genes and stimulate their transcription, or block interaction of RNAP with activator. This Lactococcus lactis subsp. lactis (strain IL1403) (Streptococcus lactis) protein is Global transcriptional regulator Spx 2.